Consider the following 370-residue polypeptide: Aminomethyltransferase (370 aa).

Belongs to the GcvT family. In terms of assembly, the glycine cleavage system is composed of four proteins: P, T, L and H.

It carries out the reaction N(6)-[(R)-S(8)-aminomethyldihydrolipoyl]-L-lysyl-[protein] + (6S)-5,6,7,8-tetrahydrofolate = N(6)-[(R)-dihydrolipoyl]-L-lysyl-[protein] + (6R)-5,10-methylene-5,6,7,8-tetrahydrofolate + NH4(+). Its function is as follows. The glycine cleavage system catalyzes the degradation of glycine. The sequence is that of Aminomethyltransferase from Clostridium botulinum (strain ATCC 19397 / Type A).